Here is a 320-residue protein sequence, read N- to C-terminus: Uridine phosphorylase 2 (320 aa).

Residues G66, R100, and 144 to 147 (RIGT) each bind phosphate. The cysteines at positions 95 and 102 are disulfide-linked. Uridine-binding positions include 148 to 149 (SG) and 223 to 225 (QGR).

This sequence belongs to the PNP/UDP phosphorylase family. In terms of assembly, homodimer. As to expression, liver specific.

It catalyses the reaction uridine + phosphate = alpha-D-ribose 1-phosphate + uracil. The enzyme catalyses 2'-deoxyuridine + phosphate = 2-deoxy-alpha-D-ribose 1-phosphate + uracil. It functions in the pathway pyrimidine metabolism; UMP biosynthesis via salvage pathway; uracil from uridine (phosphorylase route): step 1/1. With respect to regulation, a conditional disulfide bridge can form within the protein that dislocates a critical phosphate-coordinating arginine Arg-100 away from the active site, disabling the enzyme. Its function is as follows. Catalyzes the reversible phosphorylytic cleavage of uridine to uracil and ribose-1-phosphate which can then be utilized as carbon and energy sources or in the rescue of pyrimidine bases for nucleotide synthesis. Shows broad substrate specificity and can also accept deoxyuridine and other analogous compounds. The chain is Uridine phosphorylase 2 from Mus musculus (Mouse).